The chain runs to 33 residues: MNLEVLAQLTVLTLIVISGPLVIALLAVRKGNL.

Residues 5–25 (VLAQLTVLTLIVISGPLVIAL) traverse the membrane as a helical segment.

This sequence belongs to the Psb30/Ycf12 family. PSII is composed of 1 copy each of membrane proteins PsbA, PsbB, PsbC, PsbD, PsbE, PsbF, PsbH, PsbI, PsbJ, PsbK, PsbL, PsbM, PsbT, PsbX, PsbY, PsbZ, Psb30/Ycf12, peripheral proteins of the oxygen-evolving complex and a large number of cofactors. It forms dimeric complexes.

The protein localises to the plastid. The protein resides in the chloroplast thylakoid membrane. Its function is as follows. A core subunit of photosystem II (PSII), probably helps stabilize the reaction center. This is Photosystem II reaction center protein Psb30 from Cycas taitungensis (Prince sago).